The following is a 537-amino-acid chain: Phosphoenolpyruvate carboxykinase (ATP) (537 aa).

Residues arginine 64, tyrosine 204, and lysine 210 each contribute to the substrate site. ATP is bound by residues lysine 210, histidine 229, and 245–253; that span reads GLSGTGKTT. Residues lysine 210 and histidine 229 each contribute to the Mn(2+) site. Aspartate 266 serves as a coordination point for Mn(2+). ATP is bound by residues glutamate 294, arginine 330, 446–447, and threonine 452; that span reads RI. Arginine 330 contacts substrate.

It belongs to the phosphoenolpyruvate carboxykinase (ATP) family. In terms of assembly, monomer. Mn(2+) is required as a cofactor.

Its subcellular location is the cytoplasm. The enzyme catalyses oxaloacetate + ATP = phosphoenolpyruvate + ADP + CO2. It participates in carbohydrate biosynthesis; gluconeogenesis. Its function is as follows. Involved in the gluconeogenesis. Catalyzes the conversion of oxaloacetate (OAA) to phosphoenolpyruvate (PEP) through direct phosphoryl transfer between the nucleoside triphosphate and OAA. The polypeptide is Phosphoenolpyruvate carboxykinase (ATP) (Aliivibrio fischeri (strain ATCC 700601 / ES114) (Vibrio fischeri)).